Reading from the N-terminus, the 99-residue chain is DNA-directed RNA polymerase subunit Rpo11 (99 aa).

It belongs to the archaeal Rpo11/eukaryotic RPB11/RPC19 RNA polymerase subunit family. As to quaternary structure, part of the RNA polymerase complex.

The protein resides in the cytoplasm. The enzyme catalyses RNA(n) + a ribonucleoside 5'-triphosphate = RNA(n+1) + diphosphate. In terms of biological role, DNA-dependent RNA polymerase (RNAP) catalyzes the transcription of DNA into RNA using the four ribonucleoside triphosphates as substrates. The polypeptide is DNA-directed RNA polymerase subunit Rpo11 (Aeropyrum pernix (strain ATCC 700893 / DSM 11879 / JCM 9820 / NBRC 100138 / K1)).